We begin with the raw amino-acid sequence, 158 residues long: Lysozyme C (158 aa).

An N-terminal signal peptide occupies residues 1 to 18; it reads MRVLPLALLVGLLAVSDA. A C-type lysozyme domain is found at 19–150; that stretch reads KVLGKCEFAR…DQYMAECWSR (132 aa). Intrachain disulfides connect C24/C147, C46/C135, C80/C93, and C89/C107. Active-site residues include E51 and D68.

It belongs to the glycosyl hydrolase 22 family. Monomer. In terms of tissue distribution, strongly expressed in gill and gonad, and marginally detectable in hemolymph and lymphoid organ. Not expressed in kidney, hepatopancreas or tail muscle.

It is found in the secreted. It catalyses the reaction Hydrolysis of (1-&gt;4)-beta-linkages between N-acetylmuramic acid and N-acetyl-D-glucosamine residues in a peptidoglycan and between N-acetyl-D-glucosamine residues in chitodextrins.. In terms of biological role, lysozymes have primarily a bacteriolytic function; those in tissues and body fluids are associated with the monocyte-macrophage system and enhance the activity of immunoagents. Has bacteriolytic activity against Gram-positive bacterium M.luteus, and Gram-negative shrimp pathogenic bacteria V.alginolyticus, V.parahaemolyticus and V.vulnificus. May play a role in host defense. The polypeptide is Lysozyme C (Penaeus merguiensis (Banana prawn)).